The following is a 341-amino-acid chain: L-threonine 3-dehydrogenase (341 aa).

Zn(2+) is bound at residue Cys-38. Residues Thr-40 and His-43 each act as charge relay system in the active site. Residues His-63, Glu-64, Cys-93, Cys-96, Cys-99, and Cys-107 each coordinate Zn(2+). NAD(+) contacts are provided by residues Ile-175, Asp-195, Arg-200, 262–264, and 286–287; these read LGI and IY.

It belongs to the zinc-containing alcohol dehydrogenase family. As to quaternary structure, homotetramer. Zn(2+) serves as cofactor.

It localises to the cytoplasm. The catalysed reaction is L-threonine + NAD(+) = (2S)-2-amino-3-oxobutanoate + NADH + H(+). It functions in the pathway amino-acid degradation; L-threonine degradation via oxydo-reductase pathway; glycine from L-threonine: step 1/2. Catalyzes the NAD(+)-dependent oxidation of L-threonine to 2-amino-3-ketobutyrate. The polypeptide is L-threonine 3-dehydrogenase (Escherichia coli O139:H28 (strain E24377A / ETEC)).